The chain runs to 95 residues: Protein TusB (95 aa).

It belongs to the DsrH/TusB family. In terms of assembly, heterohexamer, formed by a dimer of trimers. The hexameric TusBCD complex contains 2 copies each of TusB, TusC and TusD. The TusBCD complex interacts with TusE.

The protein resides in the cytoplasm. Functionally, part of a sulfur-relay system required for 2-thiolation of 5-methylaminomethyl-2-thiouridine (mnm(5)s(2)U) at tRNA wobble positions. This chain is Protein TusB, found in Pectobacterium parmentieri.